We begin with the raw amino-acid sequence, 445 residues long: Trigger factor (445 aa).

Residues 172 to 257 enclose the PPIase FKBP-type domain; that stretch reads GDQVVIDFVG…VKSVNWAHMP (86 aa).

The protein belongs to the FKBP-type PPIase family. Tig subfamily.

The protein localises to the cytoplasm. It catalyses the reaction [protein]-peptidylproline (omega=180) = [protein]-peptidylproline (omega=0). Its function is as follows. Involved in protein export. Acts as a chaperone by maintaining the newly synthesized protein in an open conformation. Functions as a peptidyl-prolyl cis-trans isomerase. The chain is Trigger factor from Polynucleobacter asymbioticus (strain DSM 18221 / CIP 109841 / QLW-P1DMWA-1) (Polynucleobacter necessarius subsp. asymbioticus).